The following is a 297-amino-acid chain: Beta-1,3-galactosyltransferase 5 (297 aa).

The Cytoplasmic segment spans residues 1 to 7 (MAFPKMR). The chain crosses the membrane as a helical; Signal-anchor for type II membrane protein span at residues 8-28 (LMYVCLLVLGALCVYFSMYSL). Over 29-297 (NLFKEQSFVY…KPRTLLDYWQ (269 aa)) the chain is Lumenal. Residues asparagine 130, asparagine 174, and asparagine 231 are each glycosylated (N-linked (GlcNAc...) asparagine).

The protein belongs to the glycosyltransferase 31 family.

It is found in the golgi apparatus membrane. The catalysed reaction is a globoside Gb4Cer (d18:1(4E)) + UDP-alpha-D-galactose = a globoside GalGb4Cer (d18:1(4E)) + UDP + H(+). Its pathway is protein modification; protein glycosylation. Its function is as follows. Catalyzes the transfer of Gal to GlcNAc-based acceptors with a preference for the core3 O-linked glycan GlcNAc(beta1,3)GalNAc structure. Can use glycolipid LC3Cer as an efficient acceptor. The polypeptide is Beta-1,3-galactosyltransferase 5 (B3GALT5) (Pan troglodytes (Chimpanzee)).